Reading from the N-terminus, the 257-residue chain is Fructose-2,6-bisphosphatase TIGAR B (257 aa).

Residue H11 is the Tele-phosphohistidine intermediate of the active site. E89 serves as the catalytic Proton donor/acceptor.

This sequence belongs to the phosphoglycerate mutase family.

It localises to the cytoplasm. Its subcellular location is the nucleus. The protein localises to the mitochondrion. The enzyme catalyses beta-D-fructose 2,6-bisphosphate + H2O = beta-D-fructose 6-phosphate + phosphate. Its function is as follows. Fructose-bisphosphatase hydrolyzing fructose-2,6-bisphosphate as well as fructose-1,6-bisphosphate. Acts as a negative regulator of glycolysis by lowering intracellular levels of fructose-2,6-bisphosphate in a p53/TP53-dependent manner, resulting in the pentose phosphate pathway (PPP) activation and NADPH production. Contributes to the generation of reduced glutathione to cause a decrease in intracellular reactive oxygen species (ROS) content, correlating with its ability to protect cells from oxidative or metabolic stress-induced cell death. May play a role in mitophagy inhibition. The sequence is that of Fructose-2,6-bisphosphatase TIGAR B from Danio rerio (Zebrafish).